The sequence spans 618 residues: uncharacterized protein (618 aa).

Residues M1–V45 form a disordered region. Basic and acidic residues-rich tracts occupy residues K14–K27 and N36–V45. Phosphoserine is present on residues S50 and S53. A Phosphothreonine modification is found at T54. Phosphoserine is present on residues S55 and S64. ABC transporter domains lie at I76–Q325 and I388–D609. ATP-binding positions include G108–S115 and G423–S430.

It belongs to the ABC transporter superfamily.

The protein localises to the cytoplasm. This is an uncharacterized protein from Schizosaccharomyces pombe (strain 972 / ATCC 24843) (Fission yeast).